The sequence spans 261 residues: Acidic leucine-rich nuclear phosphoprotein 32 family member A (261 aa).

4 LRR repeats span residues 16-37 (QITE…TDEY), 39-60 (ALES…PKLP), 61-83 (NLKK…TTSP), and 84-105 (KLQY…KPLE). The 39-residue stretch at 118-156 (NDATQVDNYREKIFKMLPSLNFLDGFDCNDEEVQSDGDD) folds into the LRRCT domain. Composition is skewed to acidic residues over residues 145 to 185 (CNDE…EEAN) and 194 to 229 (YNDD…DGDA). The interval 145-261 (CNDEEVQSDG…VRGKKRKHDG (117 aa)) is disordered. Over residues 238–252 (AKDKDGEKEADESQV) the composition is skewed to basic and acidic residues.

This sequence belongs to the ANP32 family. Phosphorylated on serine residues.

It is found in the nucleus. The protein localises to the cytoplasm. Functionally, implicated in a number of cellular processes, including proliferation, differentiation, caspase-dependent and caspase-independent apoptosis, suppression of transformation (tumor suppressor), inhibition of protein phosphatase 2A, regulation of mRNA trafficking and stability, and inhibition of acetyltransferases as part of the INHAT (inhibitor of histone acetyltransferases) complex. This Drosophila melanogaster (Fruit fly) protein is Acidic leucine-rich nuclear phosphoprotein 32 family member A (Anp32a).